The primary structure comprises 481 residues: Heat stress transcription factor A-1b (481 aa).

Low complexity predominate over residues 1–16; sequence MESVPESVPSPNSNTP. Positions 1–23 are disordered; that stretch reads MESVPESVPSPNSNTPSIPPPVN. A DNA-binding region spans residues 25 to 119; the sequence is VPPFLSKTYD…LLKSIVRRKP (95 aa). Residues 138-204 are hydrophobic repeat HR-A/B; the sequence is ACVEVGKFGI…QMMSFLAKAV (67 aa). Over residues 213–227 the composition is skewed to polar residues; the sequence is LVQQNNNDGNRQIPG. The disordered stretch occupies residues 213 to 244; it reads LVQQNNNDGNRQIPGSNKKRRLPVDEQENRGD. A Nuclear localization signal motif is present at residues 229 to 233; sequence NKKRR. Residues 234–243 are compositionally biased toward basic and acidic residues; the sequence is LPVDEQENRG. The AHA motif lies at 418–427; it reads DPFWEQFFSV. The short motif at 467-474 is the Nuclear export signal element; that stretch reads LTEQMGLL.

This sequence belongs to the HSF family. Class A subfamily. In terms of assembly, homotrimer. Binds to HSBP. Post-translationally, exhibits temperature-dependent phosphorylation.

Its subcellular location is the cytoplasm. The protein resides in the nucleus. In terms of biological role, transcriptional activator that specifically binds DNA sequence 5'-AGAAnnTTCT-3' known as heat shock promoter elements (HSE). The protein is Heat stress transcription factor A-1b (HSFA1B) of Arabidopsis thaliana (Mouse-ear cress).